The sequence spans 340 residues: Transcription initiation factor IIB (340 aa).

Residues V16–G49 form a TFIIB-type zinc finger. Zn(2+)-binding residues include C20, C23, C41, and C44. Repeat copies occupy residues M128–R204 and F239–A315.

It belongs to the TFIIB family. In terms of assembly, associates with TFIID-IIA (DA complex) to form TFIID-IIA-IIB (DAB-complex) which is then recognized by polymerase II.

Its subcellular location is the nucleus. Functionally, general factor that plays a major role in the activation of eukaryotic genes transcribed by RNA polymerase II. The chain is Transcription initiation factor IIB (sua7) from Schizosaccharomyces pombe (strain 972 / ATCC 24843) (Fission yeast).